The following is an 880-amino-acid chain: Alanine--tRNA ligase (880 aa).

Zn(2+) contacts are provided by His-566, His-570, Cys-668, and His-672.

The protein belongs to the class-II aminoacyl-tRNA synthetase family. The cofactor is Zn(2+).

It localises to the cytoplasm. The enzyme catalyses tRNA(Ala) + L-alanine + ATP = L-alanyl-tRNA(Ala) + AMP + diphosphate. In terms of biological role, catalyzes the attachment of alanine to tRNA(Ala) in a two-step reaction: alanine is first activated by ATP to form Ala-AMP and then transferred to the acceptor end of tRNA(Ala). Also edits incorrectly charged Ser-tRNA(Ala) and Gly-tRNA(Ala) via its editing domain. The chain is Alanine--tRNA ligase from Acetivibrio thermocellus (strain ATCC 27405 / DSM 1237 / JCM 9322 / NBRC 103400 / NCIMB 10682 / NRRL B-4536 / VPI 7372) (Clostridium thermocellum).